Reading from the N-terminus, the 163-residue chain is uncharacterized protein (163 aa).

Residues 101-162 (LESMKVERKP…KMGERILERE (62 aa)) adopt a coiled-coil conformation.

This is an uncharacterized protein from Aquifex aeolicus (strain VF5).